The following is a 28-amino-acid chain: Apolipoprotein C-I (28 aa).

It belongs to the apolipoprotein C1 family.

The protein localises to the secreted. Its function is as follows. Inhibitor of lipoprotein binding to the low density lipoprotein (LDL) receptor, LDL receptor-related protein, and very low density lipoprotein (VLDL) receptor. Associates with high density lipoproteins (HDL) and the triacylglycerol-rich lipoproteins in the plasma and makes up about 10% of the protein of the VLDL and 2% of that of HDL. Appears to interfere directly with fatty acid uptake and is also the major plasma inhibitor of cholesteryl ester transfer protein (CETP). Binds free fatty acids and reduces their intracellular esterification. Modulates the interaction of APOE with beta-migrating VLDL and inhibits binding of beta-VLDL to the LDL receptor-related protein. The polypeptide is Apolipoprotein C-I (APOC1) (Oryctolagus cuniculus (Rabbit)).